The sequence spans 168 residues: Disulfide bond formation protein B 1 (168 aa).

Residues 1-14 (MNELTSRLNRERRF) are Cytoplasmic-facing. A helical transmembrane segment spans residues 15 to 31 (LVLLGVICLALIGGALY). Residues 32 to 49 (MQVVLGEAPCPLCILQRY) lie on the Periplasmic side of the membrane. A disulfide bond links C41 and C44. The chain crosses the membrane as a helical span at residues 50 to 65 (ALLFIAIFAFIAAAMP). Over 66–72 (GRKSLTF) the chain is Cytoplasmic. A helical membrane pass occupies residues 73 to 89 (FEVLVVLSAIGGIVAAG). Residues 90–144 (NHVYILANPMVSCGIDTLQPIVDDLPLAKLWPLAFQVDGFCSTPYPPILGLSLAQ) lie on the Periplasmic side of the membrane. A disulfide bridge links C102 with C130. A helical membrane pass occupies residues 145–163 (WALVAFVLTTVLVPLGIYR). At 164-168 (NRRRG) the chain is on the cytoplasmic side.

The protein belongs to the DsbB family.

It is found in the cell inner membrane. Functionally, required for disulfide bond formation in some periplasmic proteins. Acts by oxidizing the DsbA protein. This Pseudomonas entomophila (strain L48) protein is Disulfide bond formation protein B 1.